We begin with the raw amino-acid sequence, 227 residues long: Uracil phosphoribosyltransferase (227 aa).

36-40 (KGLVK) contacts GTP. 5-phospho-alpha-D-ribose 1-diphosphate is bound by residues arginine 86, arginine 111, and 145-153 (DPMLATGST). Residues isoleucine 212 and 217 to 219 (GDA) each bind uracil. Residue aspartate 218 participates in 5-phospho-alpha-D-ribose 1-diphosphate binding.

Belongs to the UPRTase family. Requires Mg(2+) as cofactor.

It catalyses the reaction UMP + diphosphate = 5-phospho-alpha-D-ribose 1-diphosphate + uracil. It participates in pyrimidine metabolism; UMP biosynthesis via salvage pathway; UMP from uracil: step 1/1. With respect to regulation, allosterically activated by GTP. Catalyzes the conversion of uracil and 5-phospho-alpha-D-ribose 1-diphosphate (PRPP) to UMP and diphosphate. This Halobacterium salinarum (strain ATCC 700922 / JCM 11081 / NRC-1) (Halobacterium halobium) protein is Uracil phosphoribosyltransferase.